The sequence spans 67 residues: DNA-directed RNA polymerase subunit Rpo10 (67 aa).

4 residues coordinate Zn(2+): Cys-7, Cys-10, Cys-44, and Cys-45.

This sequence belongs to the archaeal Rpo10/eukaryotic RPB10 RNA polymerase subunit family. In terms of assembly, part of the RNA polymerase complex. Zn(2+) serves as cofactor.

It localises to the cytoplasm. It catalyses the reaction RNA(n) + a ribonucleoside 5'-triphosphate = RNA(n+1) + diphosphate. In terms of biological role, DNA-dependent RNA polymerase (RNAP) catalyzes the transcription of DNA into RNA using the four ribonucleoside triphosphates as substrates. In Caldivirga maquilingensis (strain ATCC 700844 / DSM 13496 / JCM 10307 / IC-167), this protein is DNA-directed RNA polymerase subunit Rpo10.